Here is a 317-residue protein sequence, read N- to C-terminus: Melanocyte-stimulating hormone receptor (317 aa).

Residues 1–37 (MPMQGAQRKLLGSLNSTPTATSNLGLAANHTGAPCLE) lie on the Extracellular side of the membrane. Asn29 carries an N-linked (GlcNAc...) asparagine glycan. A helical transmembrane segment spans residues 38-63 (VSIPDGLFLSLGLVSLVENVLVVAAI). Over 64 to 72 (AKNRNLHSS) the chain is Cytoplasmic. The chain crosses the membrane as a helical span at residues 73–93 (MYCFICCLALSDLLVSGSNML). Residues 94 to 118 (ETAVILLLEAGALATRTSAVQRLHN) are Extracellular-facing. Residues 119-140 (TIDVLTCSSMLCSLCFLGAIAV) form a helical membrane-spanning segment. The Cytoplasmic portion of the chain corresponds to 141–163 (DRYISIFYALRYHSIVTLPRTQR). The helical transmembrane segment at 164 to 183 (VIAAIWVASVLSSTLFITYY) threads the bilayer. The Extracellular segment spans residues 184-191 (DHAAVLLC). The helical transmembrane segment at 192–211 (LVVFFLAMLVLMAVLYVHML) threads the bilayer. The Cytoplasmic portion of the chain corresponds to 212-240 (ARACQHAHGIIRLHKRQSPAHQGFGLRGA). The chain crosses the membrane as a helical span at residues 241 to 266 (ATLTILLGIFFLCWGPFFLHLTLVVF). Topologically, residues 267-279 (CPQHLTCSCIFKN) are extracellular. A helical membrane pass occupies residues 280-300 (FKVFLTLIICNTIIDPLIYAF). The Cytoplasmic segment spans residues 301 to 317 (RSQELRRTLKEVLLCSW). Cys315 carries the S-palmitoyl cysteine lipid modification.

Belongs to the G-protein coupled receptor 1 family. Interacts with MGRN1, but does not undergo MGRN1-mediated ubiquitination; this interaction competes with GNAS-binding and thus inhibits agonist-induced cAMP production. Interacts with OPN3; the interaction results in a decrease in MC1R-mediated cAMP signaling and ultimately a decrease in melanin production in melanocytes.

Its subcellular location is the cell membrane. Receptor for MSH (alpha, beta and gamma) and ACTH. The activity of this receptor is mediated by G proteins which activate adenylate cyclase. Mediates melanogenesis, the production of eumelanin (black/brown) and phaeomelanin (red/yellow), via regulation of cAMP signaling in melanocytes. The protein is Melanocyte-stimulating hormone receptor (MC1R) of Saguinus imperator (Emperor tamarin).